The following is a 299-amino-acid chain: CRISPR system Cms protein Csm4 (299 aa).

Belongs to the CRISPR-associated Csm4 family. Part of the Csm effector complex that includes at least Cas10(1), Csm2(3), Csm3(5), Csm4(1), Csm5(1) and mature crRNA. The Csm complex is elongated and slightly twisted with a maximal length of 215 Angstroms and a diameter of 75-80 Angstroms. It has been modeled to have a central protein filamant of Csm3 subunits along which the dsRNA helix of paired crRNA and target RNA binds. The filament is capped at one end by Cas10 and Csm4 and at the other end by Csm5; ssDNA is thought to bind to the N-terminal HD domain of Cas10. Csm with a precursor crRNA does not include Csm5, while Cas6, the enzyme probably involved in pre-crRNA processing, is found associated with a subset of the Csm complex.

CRISPR (clustered regularly interspaced short palindromic repeat) is an adaptive immune system that provides protection against mobile genetic elements (viruses, transposable elements and conjugative plasmids). CRISPR clusters contain spacers, sequences complementary to antecedent mobile elements, and target invading nucleic acids. CRISPR clusters are transcribed and processed into CRISPR RNA (crRNA). The type III-A Csm effector complex binds crRNA and acts as a crRNA-guided RNase, DNase and cyclic oligoadenylate synthase; binding of target RNA cognate to the crRNA is required for all activities. In a heterologous host this Csm effector complex restricts ssRNA phage MS2, suggesting it may target RNA viruses in vivo. In terms of biological role, csm functions as a non-specific ssDNase. Base-pairing between crRNA and target RNA to form a ternary Csm complex activates a ssDNase activity; target RNA cleavage suppresses the ssDNase, a temporal control that prevents uncontrolled DNA degradation. Viral RNA transcripts probably tether the Csm complex to the viral genome, recruiting Cas10 ssDNA activity which is able to degrade DNA in the transcription bubble, spatially controlling the DNase activity. Its function is as follows. The subunit probably binds to the 5' handle of the crRNA, helping in discrimination between self- and non-self. This is CRISPR system Cms protein Csm4 from Streptococcus thermophilus.